A 383-amino-acid chain; its full sequence is uncharacterized protein (383 aa).

4 disordered regions span residues 1-30 (MDLC…PTCT), 114-144 (ETKP…STAS), 262-289 (GEKR…ARTS), and 341-360 (AKDP…NSPQ). Positions 10-26 (DLENGENNEIQSTEETE) are enriched in acidic residues. Positions 128–141 (SSPSQTQAAPQGPS) are enriched in low complexity. Residues 262–271 (GEKRPSELAK) are compositionally biased toward basic and acidic residues.

This is an uncharacterized protein from Macaca fascicularis (Crab-eating macaque).